The primary structure comprises 590 residues: Ankyrin repeat-containing protein ITN1 (590 aa).

The interval 25–44 (ENQNPMIDPSPTPSPSATAT) is disordered. ANK repeat units lie at residues 73–102 (HNDT…SQME), 128–157 (LGET…RESI), 163–192 (SGYD…TLSQ), 197–226 (SNAT…NLLE), 231–260 (NNKN…QLAR), 265–294 (KGQT…AIVM), and 299–329 (SCNT…NANT). Transmembrane regions (helical) follow at residues 422–442 (VTVV…TVPG), 460–480 (IFFI…VVQI), 500–520 (LMWL…YIVV), and 531–551 (VTVV…YYVV).

In terms of assembly, interacts with REM19/RTV1. As to expression, expressed in roots, shoots, leaf vasculature and stems.

It is found in the cell membrane. Functionally, involved in salt stress tolerance. May act through abscisic acid (ABA) signaling pathways and promote reactive oxygen species (ROS) production. The polypeptide is Ankyrin repeat-containing protein ITN1 (Arabidopsis thaliana (Mouse-ear cress)).